The following is a 507-amino-acid chain: Phytoene dehydrogenase (507 aa).

12 to 45 serves as a coordination point for FAD; that stretch reads VVVGAGLAGLAAALHLLGAGRRVTVVEREDVPGG.

Belongs to the carotenoid/retinoid oxidoreductase family. It depends on FAD as a cofactor.

Its pathway is carotenoid biosynthesis; lycopene biosynthesis. Its function is as follows. This enzyme converts phytoene into zeta-carotene via the intermediary of phytofluene by the symmetrical introduction of two double bonds at the C-11 and C-11' positions of phytoene. This chain is Phytoene dehydrogenase (crtI), found in Streptomyces griseus.